The chain runs to 262 residues: MGSSCLPPGFRFHPTDEELIGYYLSRKIEGLEIELEVIPVIDLYKFDPWELPGKSFLPNRDLEWFFFCPRDKKYANGSRTNRATKAGYWKATGKDRKITCKSSHVIAGYRKTLVFYEGRAPLGDRTNWFMHEYRLCDIDDHSQKSPNFKGAFALCRVVKKNELKKNSKSLKNKNEQDIGSCYSSLATSPCRDEASQIQSFKPSSTTNDSSSIWISPDFILDSSKDYPQIKEVASECFPNYHFPVTTANHHVEFPLQEMLVRS.

The region spanning 6 to 160 (LPPGFRFHPT…AFALCRVVKK (155 aa)) is the NAC domain. A DNA-binding region spans residues 107 to 166 (AGYRKTLVFYEGRAPLGDRTNWFMHEYRLCDIDDHSQKSPNFKGAFALCRVVKKNELKKN).

Its subcellular location is the nucleus. In terms of biological role, transcription factor involved in tissue reunion of wounded inflorescence stems. Required for the division of pith cells in the reunion process, which is dependent on polar-transported auxin and the wound-inducible hormones ethylene and jasmonate. Binds to the promoters of XTH19 and XTH20 to induce their expression via auxin signaling. XTH19 and XTH20 are involved in cell proliferation in the tissue reunion process of incised stems. Involved in hypocotyl graft union formation. Required for the auxin- mediated promotion of vascular tissue proliferation during hypocotyl graft attachment. The sequence is that of NAC domain-containing protein 71 from Arabidopsis thaliana (Mouse-ear cress).